The chain runs to 130 residues: Small ribosomal subunit protein uS9 (130 aa).

Belongs to the universal ribosomal protein uS9 family.

In Pseudomonas entomophila (strain L48), this protein is Small ribosomal subunit protein uS9.